We begin with the raw amino-acid sequence, 288 residues long: Light-independent protochlorophyllide reductase iron-sulfur ATP-binding protein (288 aa).

ATP contacts are provided by residues 12–17 (GIGKST) and lysine 41. Serine 16 contacts Mg(2+). 2 residues coordinate [4Fe-4S] cluster: cysteine 97 and cysteine 131. 182–183 (NR) is a binding site for ATP.

It belongs to the NifH/BchL/ChlL family. In terms of assembly, homodimer. Protochlorophyllide reductase is composed of three subunits; ChlL, ChlN and ChlB. [4Fe-4S] cluster is required as a cofactor.

It catalyses the reaction chlorophyllide a + oxidized 2[4Fe-4S]-[ferredoxin] + 2 ADP + 2 phosphate = protochlorophyllide a + reduced 2[4Fe-4S]-[ferredoxin] + 2 ATP + 2 H2O. Its pathway is porphyrin-containing compound metabolism; chlorophyll biosynthesis (light-independent). Functionally, component of the dark-operative protochlorophyllide reductase (DPOR) that uses Mg-ATP and reduced ferredoxin to reduce ring D of protochlorophyllide (Pchlide) to form chlorophyllide a (Chlide). This reaction is light-independent. The L component serves as a unique electron donor to the NB-component of the complex, and binds Mg-ATP. The polypeptide is Light-independent protochlorophyllide reductase iron-sulfur ATP-binding protein (Synechocystis sp. (strain ATCC 27184 / PCC 6803 / Kazusa)).